Reading from the N-terminus, the 527-residue chain is Probable malate:quinone oxidoreductase (527 aa).

It belongs to the MQO family. Requires FAD as cofactor.

The enzyme catalyses (S)-malate + a quinone = a quinol + oxaloacetate. The protein operates within carbohydrate metabolism; tricarboxylic acid cycle; oxaloacetate from (S)-malate (quinone route): step 1/1. The sequence is that of Probable malate:quinone oxidoreductase from Pectobacterium carotovorum subsp. carotovorum (strain PC1).